The following is a 72-amino-acid chain: Translation initiation factor IF-1 (72 aa).

One can recognise an S1-like domain in the interval 1–72 (MAKEELLEFP…TKGRITYRFK (72 aa)).

The protein belongs to the IF-1 family. As to quaternary structure, component of the 30S ribosomal translation pre-initiation complex which assembles on the 30S ribosome in the order IF-2 and IF-3, IF-1 and N-formylmethionyl-tRNA(fMet); mRNA recruitment can occur at any time during PIC assembly.

The protein resides in the cytoplasm. Its function is as follows. One of the essential components for the initiation of protein synthesis. Stabilizes the binding of IF-2 and IF-3 on the 30S subunit to which N-formylmethionyl-tRNA(fMet) subsequently binds. Helps modulate mRNA selection, yielding the 30S pre-initiation complex (PIC). Upon addition of the 50S ribosomal subunit IF-1, IF-2 and IF-3 are released leaving the mature 70S translation initiation complex. This is Translation initiation factor IF-1 from Caulobacter vibrioides (strain ATCC 19089 / CIP 103742 / CB 15) (Caulobacter crescentus).